Here is a 543-residue protein sequence, read N- to C-terminus: Thermosome subunit beta (543 aa).

The interval 522–543 (TKSSSSSSNPPKSGSSSESSED) is disordered. Residues 523–543 (KSSSSSSNPPKSGSSSESSED) show a composition bias toward low complexity.

It belongs to the TCP-1 chaperonin family. As to quaternary structure, forms a Heterooligomeric complex of two stacked eight-membered rings. The N-terminus is blocked.

Its function is as follows. Molecular chaperone; binds unfolded polypeptides in vitro, and has a weak ATPase activity. The protein is Thermosome subunit beta (thsB) of Thermoplasma acidophilum (strain ATCC 25905 / DSM 1728 / JCM 9062 / NBRC 15155 / AMRC-C165).